A 241-amino-acid polypeptide reads, in one-letter code: Aliphatic sulfonates import ATP-binding protein SsuB (241 aa).

The 217-residue stretch at 10-226 (VHLHGFSRSF…RPDHPAFMQL (217 aa)) folds into the ABC transporter domain. ATP is bound at residue 42–49 (GESGSGKT).

Belongs to the ABC transporter superfamily. Aliphatic sulfonates importer (TC 3.A.1.17.2) family. In terms of assembly, the complex is composed of two ATP-binding proteins (SsuB), two transmembrane proteins (SsuC) and a solute-binding protein (SsuA).

The protein localises to the cell inner membrane. The enzyme catalyses ATP + H2O + aliphatic sulfonate-[sulfonate-binding protein]Side 1 = ADP + phosphate + aliphatic sulfonateSide 2 + [sulfonate-binding protein]Side 1.. In terms of biological role, part of the ABC transporter complex SsuABC involved in aliphatic sulfonates import. Responsible for energy coupling to the transport system. The protein is Aliphatic sulfonates import ATP-binding protein SsuB of Delftia acidovorans (Pseudomonas acidovorans).